Consider the following 163-residue polypeptide: MIFHTGTTKPTLVLLCCIGTWLATCSLSFGAPISKEDLRTTIDLLKQESQDLYNNYSIKQASGMSADESIQLPCFSLDREALTNISVIIAHLEKVKVLSENTVDTSWVIRWLTNISCFNPLNLNISVPGNTDESYDCKVFVLTVLKQFSNCMAELQAKDNTTC.

The first 23 residues, Met1–Ala23, serve as a signal peptide directing secretion. Asn55, Asn84, and Asn124 each carry an N-linked (GlcNAc...) asparagine glycan.

Its subcellular location is the secreted. In terms of biological role, activates STAT3 and possibly STAT1 and STAT5 through the IL31 heterodimeric receptor composed of IL31RA and OSMR. May function in skin immunity. Enhances myeloid progenitor cell survival in vitro. Induces RETNLA and serum amyloid A protein expression in macrophages. In Mus musculus (Mouse), this protein is Interleukin-31 (Il31).